The primary structure comprises 130 residues: Large ribosomal subunit protein bL19 (130 aa).

It belongs to the bacterial ribosomal protein bL19 family.

This protein is located at the 30S-50S ribosomal subunit interface and may play a role in the structure and function of the aminoacyl-tRNA binding site. The protein is Large ribosomal subunit protein bL19 of Mycoplasma capricolum subsp. capricolum (strain California kid / ATCC 27343 / NCTC 10154).